The following is a 373-amino-acid chain: Histone-lysine N-methyltransferase SETD7 (373 aa).

The disordered stretch occupies residues 1-20; the sequence is MDSDDDNMEEVVEGPLDEDD. 3 MORN repeats span residues 36 to 58, 59 to 81, and 106 to 128; these read FEGH…DGST, LEGF…DGGA, and FRGR…DGAC. Positions 214–336 constitute an SET domain; sequence QRVYVGQSLI…KDEELTVAYG (123 aa). Residues 226 to 228, N296, and H297 contribute to the S-adenosyl-L-methionine site; that span reads AGE.

This sequence belongs to the class V-like SAM-binding methyltransferase superfamily. Histone-lysine methyltransferase family. SET7 subfamily.

It localises to the nucleus. Its subcellular location is the chromosome. It carries out the reaction L-lysyl(4)-[histone H3] + S-adenosyl-L-methionine = N(6)-methyl-L-lysyl(4)-[histone H3] + S-adenosyl-L-homocysteine + H(+). The catalysed reaction is L-lysyl-[protein] + S-adenosyl-L-methionine = N(6)-methyl-L-lysyl-[protein] + S-adenosyl-L-homocysteine + H(+). In terms of biological role, histone methyltransferase that specifically monomethylates 'Lys-4' of histone H3. H3 'Lys-4' methylation represents a specific tag for epigenetic transcriptional activation. Plays a central role in the transcriptional activation of genes. Also has methyltransferase activity toward non-histone proteins. In Danio rerio (Zebrafish), this protein is Histone-lysine N-methyltransferase SETD7 (setd7).